The following is a 486-amino-acid chain: Odorant receptor coreceptor (486 aa).

Residues 1 to 47 lie on the Cytoplasmic side of the membrane; sequence MTTSMQPSKYTGLVADLMPNIRAMKYSGLFMHNFTGGSAFMKKVYSS. A helical membrane pass occupies residues 48-68; that stretch reads VHLVFLLMQFTFILVNMALNA. Topologically, residues 69-75 are extracellular; sequence EEVNELS. Residues 76–96 traverse the membrane as a helical segment; it reads GNTITTLFFTHCITKFIYLAV. Residues 97–135 lie on the Cytoplasmic side of the membrane; it reads NQKNFYRTLNIWNQVNTHPLFAESDARYHSIALAKMRKL. Residues 136–156 form a helical membrane-spanning segment; it reads FFLVMLTTVASATAWTTITFF. Topologically, residues 157–191 are extracellular; that stretch reads GDSVKMVVDHETNSSIPVEIPRLPIKSFYPWNASH. N-linked (GlcNAc...) asparagine glycans are attached at residues Asn-169 and Asn-188. Residues 192–212 form a helical membrane-spanning segment; it reads GMFYMISFAFQIYYVLFSMIH. Residues 213-351 are Cytoplasmic-facing; sequence SNLCDVMFCS…VERHKHVVRL (139 aa). Residues 352-372 form a helical membrane-spanning segment; that stretch reads VAAIGDTYGAALLLHMLTSTI. The Extracellular segment spans residues 373-390; the sequence is KLTLLAYQATKINGVNVY. Residues 391-411 form a helical membrane-spanning segment; it reads AFTVVGYLGYALAQVFHFCIF. The Cytoplasmic segment spans residues 412 to 462; the sequence is GNRLIEESSSVMEAAYSCHWYDGSEEAKTFVQIVCQQCQKAMSISGAKFFT. The chain crosses the membrane as a helical span at residues 463–483; the sequence is VSLDLFASVLGAVVTYFMVLV. Residues 484–486 are Extracellular-facing; sequence QLK.

The protein belongs to the insect chemoreceptor superfamily. Heteromeric odorant receptor channel (TC 1.A.69) family. Orco subfamily. Heterodimer with conventional odorant receptors (ORs). Complexes exist early in the endomembrane system in olfactory sensory neurons (OSNs), coupling these complexes to the conserved ciliary trafficking pathway. In terms of tissue distribution, expression is restricted to olfactory sensory neurons (OSNs). Coexpressed with Snmp in a lateral-distal population of OSNs. Expressed in the embryonic antennal-maxillary complex, in all 21 OSNs of the larval dorsal organ, in the pupal antennal OSNs, in all 120 adult maxillary palp neurons and in approximately 70-80% of adult antennal OSNs, where expression is highest at the dorsal-medial edge. Localized to OSN cell bodies and to the distal portion of ciliated OSN dendrites.

It is found in the cell membrane. In terms of biological role, odorant coreceptor which complexes with conventional odorant receptors (ORs) to form odorant-sensing units, providing sensitive and prolonged odorant signaling and calcium permeability. Orco is a universal and integral part of the functional odorant receptor, involved in the dendritic localization of other olfactory receptors. Expression of Orco alone leads to formation of rapid and transient ion channels not directly responding to odorants, but directly activated by intracellular cAMP or cGMP. Snmp, Or67d and lush act in concert to capture fatty-acid-derived male pheromone 11-cis vaccenyl acetate (cVA) molecules on the surface of Or67d expressing olfactory dendrites and facilitate their transfer to the odorant-receptor Orco complex. The protein is Odorant receptor coreceptor (Orco) of Drosophila melanogaster (Fruit fly).